Consider the following 648-residue polypeptide: Macrolide export ATP-binding/permease protein MacB (648 aa).

Residues 5–243 form the ABC transporter domain; sequence LELKDIRRSY…TGGTEPVVNT (239 aa). 41-48 contacts ATP; that stretch reads GASGSGKS. 4 helical membrane passes run 273 to 293, 523 to 543, 576 to 596, and 611 to 631; these read LLTM…VVVG, LFLT…VMNI, AVLV…LIAF, and PLAL…FGWL.

It belongs to the ABC transporter superfamily. Macrolide exporter (TC 3.A.1.122) family. As to quaternary structure, homodimer. Part of the tripartite efflux system MacAB-TolC, which is composed of an inner membrane transporter, MacB, a periplasmic membrane fusion protein, MacA, and an outer membrane component, TolC. The complex forms a large protein conduit and can translocate molecules across both the inner and outer membranes. Interacts with MacA.

The protein localises to the cell inner membrane. Part of the tripartite efflux system MacAB-TolC. MacB is a non-canonical ABC transporter that contains transmembrane domains (TMD), which form a pore in the inner membrane, and an ATP-binding domain (NBD), which is responsible for energy generation. Confers resistance against macrolides. This is Macrolide export ATP-binding/permease protein MacB from Escherichia coli O6:K15:H31 (strain 536 / UPEC).